We begin with the raw amino-acid sequence, 363 residues long: D-proline dehydrogenase (363 aa).

Residue Val3–Tyr17 participates in FAD binding.

It belongs to the DadA oxidoreductase family. In terms of assembly, homotetramer. It depends on FAD as a cofactor.

It localises to the cell membrane. The enzyme catalyses D-proline + A = 1-pyrroline-2-carboxylate + AH2. Functionally, catalyzes the dehydrogenation of D-proline. Can also use other D-amino acids, but with lower efficiency. In Pyrobaculum islandicum (strain DSM 4184 / JCM 9189 / GEO3), this protein is D-proline dehydrogenase (dpdh).